Here is a 317-residue protein sequence, read N- to C-terminus: tRNA pseudouridine synthase B (317 aa).

Aspartate 47 (nucleophile) is an active-site residue.

The protein belongs to the pseudouridine synthase TruB family. Type 1 subfamily.

It catalyses the reaction uridine(55) in tRNA = pseudouridine(55) in tRNA. In terms of biological role, responsible for synthesis of pseudouridine from uracil-55 in the psi GC loop of transfer RNAs. This Shewanella sp. (strain MR-7) protein is tRNA pseudouridine synthase B.